Reading from the N-terminus, the 429-residue chain is L-threonine dehydratase biosynthetic IlvA (429 aa).

N6-(pyridoxal phosphate)lysine is present on Lys66. Residues Asn93, Gly196–Cys200, and Ser322 each bind pyridoxal 5'-phosphate. Residues His346–Pro420 form the ACT-like domain.

Belongs to the serine/threonine dehydratase family. Homotetramer. Pyridoxal 5'-phosphate is required as a cofactor.

It carries out the reaction L-threonine = 2-oxobutanoate + NH4(+). It participates in amino-acid biosynthesis; L-isoleucine biosynthesis; 2-oxobutanoate from L-threonine: step 1/1. Functionally, catalyzes the anaerobic formation of alpha-ketobutyrate and ammonia from threonine in a two-step reaction. The first step involved a dehydration of threonine and a production of enamine intermediates (aminocrotonate), which tautomerizes to its imine form (iminobutyrate). Both intermediates are unstable and short-lived. The second step is the nonenzymatic hydrolysis of the enamine/imine intermediates to form 2-ketobutyrate and free ammonia. In the low water environment of the cell, the second step is accelerated by RidA. The polypeptide is L-threonine dehydratase biosynthetic IlvA (ilvA) (Mycobacterium bovis (strain ATCC BAA-935 / AF2122/97)).